A 1200-amino-acid chain; its full sequence is MKVAGGLELGAAALLSASPRALVTLSTGPTCSILPKNPLFPQNLSSQPCIKMEGDKSLTFSSYGLQWCLYELDKEEFQTFKELLKKKSSESTTCSIPQFEIENANVECLALLLHEYYGASLAWATSISIFENMNLRTLSEKARDDMKRHSPEDPEATMTDQGPSKEKVPGISQAVQQDSATAAETKEQEISQAMEQEGATAAETEEQEISQAMEQEGATAAETEEQGHGGDTWDYKSHVMTKFAEEEDVRRSFENTAADWPEMQTLAGAFDSDRWGFRPRTVVLHGKSGIGKSALARRIVLCWAQGGLYQGMFSYVFFLPVREMQRKKESSVTEFISREWPDSQAPVTEIMSRPERLLFIIDGFDDLGSVLNNDTKLCKDWAEKQPPFTLIRSLLRKVLLPESFLIVTVRDVGTEKLKSEVVSPRYLLVRGISGEQRIHLLLERGIGEHQKTQGLRAIMNNRELLDQCQVPAVGSLICVALQLQDVVGESVAPFNQTLTGLHAAFVFHQLTPRGVVRRCLNLEERVVLKRFCRMAVEGVWNRKSVFDGDDLMVQGLGESELRALFHMNILLPDSHCEEYYTFFHLSLQDFCAALYYVLEGLEIEPALCPLYVEKTKRSMELKQAGFHIHSLWMKRFLFGLVSEDVRRPLEVLLGCPVPLGVKQKLLHWVSLLGQQPNATTPGDTLDAFHCLFETQDKEFVRLALNSFQEVWLPINQNLDLIASSFCLQHCPYLRKIRVDVKGIFPRDESAEACPVVPLWMRDKTLIEEQWEDFCSMLGTHPHLRQLDLGSSILTERAMKTLCAKLRHPTCKIQTLMFRNAQITPGVQHLWRIVMANRNLRSLNLGGTHLKEEDVRMACEALKHPKCLLESLRLDCCGLTHACYLKISQILTTSPSLKSLSLAGNKVTDQGVMPLSDALRVSQCALQKLILEDCGITATGCQSLASALVSNRSLTHLCLSNNSLGNEGVNLLCRSMRLPHCSLQRLMLNQCHLDTAGCGFLALALMGNSWLTHLSLSMNPVEDNGVKLLCEVMREPSCHLQDLELVKCHLTAACCESLSCVISRSRHLKSLDLTDNALGDGGVAALCEGLKQKNSVLARLGLKACGLTSDCCEALSLALSCNRHLTSLNLVQNNFSPKGMMKLCSAFACPTSNLQIIGLWKWQYPVQIRKLLEEVQLLKPRVVIDGSWHSFDEDDRYWWKN.

Residues 57-148 (SLTFSSYGLQ…SEKARDDMKR (92 aa)) form the Pyrin domain. Basic and acidic residues predominate over residues 142–152 (ARDDMKRHSPE). The segment at 142 to 232 (ARDDMKRHSP…TEEQGHGGDT (91 aa)) is disordered. Polar residues predominate over residues 173 to 182 (QAVQQDSATA). 2 stretches are compositionally biased toward low complexity: residues 192 to 202 (QAMEQEGATAA) and 209 to 221 (ISQA…ATAA). The region spanning 280–602 (RTVVLHGKSG…ALYYVLEGLE (323 aa)) is the NACHT domain. 286 to 293 (GKSGIGKS) is a binding site for ATP. 13 LRR repeats span residues 704-727 (LNSF…SFCL), 730-753 (CPYL…AEAC), 780-803 (HPHL…TLCA), 809-832 (TCKI…LWRI), 836-863 (NRNL…ALKH), 865-892 (KCLL…ILTT), 893-916 (SPSL…PLSD), 950-973 (NRSL…LLCR), 979-1002 (HCSL…FLAL), 1007-1034 (NSWL…VMRE), 1036-1059 (SCHL…SLSC), 1064-1092 (SRHL…LKQK), and 1121-1142 (NRHL…MMKL).

It belongs to the NLRP family. Component of the subcortical maternal complex (SCMC), at least composed of NLRP5, KHDC3, OOEP, and TLE6 isoform 1. Within the complex, interacts with OOEP, KHDC3L and TLE6. The SCMC may facilitate translocation of its components between the nuclear and cytoplasmic compartments. As part of the SCMC interacts with the SCMC-associated protein ZBED3. As part of the SCMC interacts with the SCMC-associated protein CFL1/Cofilin-1. Interacts with PRKCE. Interacts with TUBB3 at cytoskeleton microtubules. In terms of processing, phosphorylated by PRKCE. In terms of tissue distribution, expressed in cumulus cells (at protein level). Highly abundant in oocytes and early embryos, however poorly expressed in somatic tissues such as the liver and spinal cord.

The protein resides in the cytoplasm. The protein localises to the cytoplasmic vesicle. It localises to the secretory vesicle. It is found in the cortical granule. Its subcellular location is the mitochondrion. The protein resides in the nucleus. The protein localises to the nucleolus. It localises to the golgi apparatus. Component of the subcortical maternal complex (SCMC), a multiprotein complex that plays a key role in early embryonic development. The SCMC complex is a structural constituent of cytoplasmic lattices, which consist in fibrous structures found in the cytoplasm of oocytes and preimplantation embryos. They are required to store maternal proteins critical for embryonic development, such as proteins that control epigenetic reprogramming of the preimplantation embryo, and prevent their degradation or activation. Required for the localization of cortical granules to the cortex of oocytes, via association with the cortical actin scaffold. Required for cortical actin clearance prior to oocyte exocytosis and prevention of polyspermy. Involved in regulating post-fertilization Ca(2+) release and endoplasmic reticulum storage (ER) storage via regulation of cellular localization. May be involved in the localization of mitochondria to the cytoplasm and perinuclear region in oocytes and early stage embryos, independent of its role in CPL formation. The polypeptide is NACHT, LRR and PYD domains-containing protein 5 (NLRP5) (Homo sapiens (Human)).